Consider the following 86-residue polypeptide: Putative pro-MCH-like protein 1 (86 aa).

Positions 31–49 (GSVAFPAENGVQDTESTQE) are NGE-like. The interval 38–62 (ENGVQDTESTQEKRETGDEENSAKF) is disordered. Positions 52-64 (ETGDEENSAKFPV) are NEI-like. The tract at residues 68–86 (DFDTLSCMLGRVYQSCWQV) is melanin-concentrating hormone-like.

This sequence belongs to the melanin-concentrating hormone family. In terms of tissue distribution, expressed in testis and brain.

The chain is Putative pro-MCH-like protein 1 (PMCHL1) from Homo sapiens (Human).